The following is a 212-amino-acid chain: Glycerol-3-phosphate acyltransferase (212 aa).

The next 5 membrane-spanning stretches (helical) occupy residues isoleucine 3–glycine 23, isoleucine 70–isoleucine 90, alanine 110–leucine 130, isoleucine 143–leucine 163, and threonine 164–arginine 184.

The protein belongs to the PlsY family. Probably interacts with PlsX.

The protein resides in the cell membrane. The catalysed reaction is an acyl phosphate + sn-glycerol 3-phosphate = a 1-acyl-sn-glycero-3-phosphate + phosphate. It participates in lipid metabolism; phospholipid metabolism. Functionally, catalyzes the transfer of an acyl group from acyl-phosphate (acyl-PO(4)) to glycerol-3-phosphate (G3P) to form lysophosphatidic acid (LPA). This enzyme utilizes acyl-phosphate as fatty acyl donor, but not acyl-CoA or acyl-ACP. The sequence is that of Glycerol-3-phosphate acyltransferase from Streptococcus agalactiae serotype III (strain NEM316).